The sequence spans 257 residues: Hydroxyacylglutathione hydrolase (257 aa).

Residues H54, H56, D58, H59, H113, D137, and H175 each contribute to the Zn(2+) site.

The protein belongs to the metallo-beta-lactamase superfamily. Glyoxalase II family. As to quaternary structure, monomer. It depends on Zn(2+) as a cofactor.

The enzyme catalyses an S-(2-hydroxyacyl)glutathione + H2O = a 2-hydroxy carboxylate + glutathione + H(+). Its pathway is secondary metabolite metabolism; methylglyoxal degradation; (R)-lactate from methylglyoxal: step 2/2. In terms of biological role, thiolesterase that catalyzes the hydrolysis of S-D-lactoyl-glutathione to form glutathione and D-lactic acid. The protein is Hydroxyacylglutathione hydrolase of Acaryochloris marina (strain MBIC 11017).